Reading from the N-terminus, the 260-residue chain is Thrombin-like enzyme gloshedobin (260 aa).

The signal sequence occupies residues 1–18 (MVLIRVQANLLILQLSYA). A propeptide spanning residues 19 to 24 (QKSSEL) is cleaved from the precursor. In terms of domain architecture, Peptidase S1 spans 25-252 (IIGGDECNIN…TEWIQSIIAG (228 aa)). Disulfide bonds link cysteine 31–cysteine 165, cysteine 52–cysteine 68, cysteine 100–cysteine 258, cysteine 144–cysteine 212, cysteine 176–cysteine 191, and cysteine 202–cysteine 227. Residues histidine 67 and aspartate 112 each act as charge relay system in the active site. 2 N-linked (GlcNAc...) asparagine glycosylation sites follow: asparagine 123 and asparagine 124. The active-site Charge relay system is serine 206.

This sequence belongs to the peptidase S1 family. Snake venom subfamily. Monomer. As to expression, expressed by the venom gland.

The protein localises to the secreted. With respect to regulation, completely inhibited by PMSF, and N-tosyl-Lphenylalanine chloromethyl ketone (TPCK) and poorly inhibited by benzamidine and derivates. Not inhibited by EDTA, heparin and hirudin. Thrombin-like snake venom serine protease. The recombinant form clots fibrinogen by cleaving fibrinogen Aalpha chain (FGA), and slowly Bbeta chain (FGB). Has amidolytic activities. The sequence is that of Thrombin-like enzyme gloshedobin from Gloydius shedaoensis (Shedao island pit viper).